The following is a 257-amino-acid chain: Thiazole synthase (257 aa).

Lys-96 serves as the catalytic Schiff-base intermediate with DXP. Residues Gly-157, 184 to 185 (AG), and 206 to 207 (NT) contribute to the 1-deoxy-D-xylulose 5-phosphate site.

Belongs to the ThiG family. As to quaternary structure, homotetramer. Forms heterodimers with either ThiH or ThiS.

It localises to the cytoplasm. It carries out the reaction [ThiS sulfur-carrier protein]-C-terminal-Gly-aminoethanethioate + 2-iminoacetate + 1-deoxy-D-xylulose 5-phosphate = [ThiS sulfur-carrier protein]-C-terminal Gly-Gly + 2-[(2R,5Z)-2-carboxy-4-methylthiazol-5(2H)-ylidene]ethyl phosphate + 2 H2O + H(+). It participates in cofactor biosynthesis; thiamine diphosphate biosynthesis. In terms of biological role, catalyzes the rearrangement of 1-deoxy-D-xylulose 5-phosphate (DXP) to produce the thiazole phosphate moiety of thiamine. Sulfur is provided by the thiocarboxylate moiety of the carrier protein ThiS. In vitro, sulfur can be provided by H(2)S. This is Thiazole synthase from Allorhizobium ampelinum (strain ATCC BAA-846 / DSM 112012 / S4) (Agrobacterium vitis (strain S4)).